The primary structure comprises 779 residues: Ribosome-releasing factor 2, mitochondrial (779 aa).

Positions Ala-68 to Glu-353 constitute a tr-type G domain. Residues Ala-77 to Thr-84, Asp-141 to His-145, and Asn-195 to Asp-198 contribute to the GTP site.

It belongs to the TRAFAC class translation factor GTPase superfamily. Classic translation factor GTPase family. EF-G/EF-2 subfamily.

It localises to the mitochondrion. The catalysed reaction is GTP + H2O = GDP + phosphate + H(+). Its function is as follows. Mitochondrial GTPase that mediates the disassembly of ribosomes from messenger RNA at the termination of mitochondrial protein biosynthesis. Acts in collaboration with MRRF. GTP hydrolysis follows the ribosome disassembly and probably occurs on the ribosome large subunit. Not involved in the GTP-dependent ribosomal translocation step during translation elongation. In Rattus norvegicus (Rat), this protein is Ribosome-releasing factor 2, mitochondrial (Gfm2).